The sequence spans 189 residues: Tumor protein p53-inducible protein 11 (189 aa).

The Cytoplasmic portion of the chain corresponds to 1–63; that stretch reads MAAKQPPPLM…FAVREPLGLR (63 aa). Ser-14 carries the post-translational modification Phosphoserine. A helical membrane pass occupies residues 64 to 84; it reads VWQFVSAVLFSGIAIMALAFP. Over 85-108 the chain is Extracellular; that stretch reads DQLYDAVFDGAQVTSKTPIRLYGG. The helical transmembrane segment at 109–129 threads the bilayer; sequence ALLSISLIMWNALYTAEKVII. Residue Arg-130 is a topological domain, cytoplasmic. The chain crosses the membrane as a helical span at residues 131–151; the sequence is WTLLTEACYFSVQFLVVTATL. Residues 152-159 lie on the Extracellular side of the membrane; it reads AETGLASQ. A helical transmembrane segment spans residues 160–180; the sequence is GILLLLASRLLFVAISVYYYY. The Cytoplasmic portion of the chain corresponds to 181-189; sequence QVGRKPKKV.

The protein localises to the membrane. The chain is Tumor protein p53-inducible protein 11 (TP53I11) from Bos taurus (Bovine).